The sequence spans 148 residues: Ribosome maturation factor RimP (148 aa).

This sequence belongs to the RimP family.

The protein localises to the cytoplasm. Functionally, required for maturation of 30S ribosomal subunits. In Thermosipho africanus (strain TCF52B), this protein is Ribosome maturation factor RimP.